The following is a 493-amino-acid chain: Transcript termination protein A18 (493 aa).

The 157-residue stretch at 100-256 (MIELKRPLYI…NSIINIAKLS (157 aa)) folds into the Helicase ATP-binding domain. 113-120 (LACGFGKT) lines the ATP pocket. Positions 206-209 (DESH) match the DESH box motif.

Belongs to the helicase family. Poxviruses subfamily. As to quaternary structure, interacts with G2. Might be part of a transcription complex composed at least of G2, A18, and H5.

The protein localises to the virion. Functionally, DNA helicase which seems to act as a postreplicative transcription termination factor. Involved in ATP-dependent release of nascent RNA. Forms a stable complex with single-stranded DNA, and to a lesser extent RNA. This Camelus protein is Transcript termination protein A18.